The following is a 206-amino-acid chain: Urease accessory protein UreG (206 aa).

13 to 20 contributes to the GTP binding site; sequence GPVGSGKT.

The protein belongs to the SIMIBI class G3E GTPase family. UreG subfamily. In terms of assembly, homodimer. UreD, UreF and UreG form a complex that acts as a GTP-hydrolysis-dependent molecular chaperone, activating the urease apoprotein by helping to assemble the nickel containing metallocenter of UreC. The UreE protein probably delivers the nickel.

It localises to the cytoplasm. Functionally, facilitates the functional incorporation of the urease nickel metallocenter. This process requires GTP hydrolysis, probably effectuated by UreG. This chain is Urease accessory protein UreG, found in Natronomonas pharaonis (strain ATCC 35678 / DSM 2160 / CIP 103997 / JCM 8858 / NBRC 14720 / NCIMB 2260 / Gabara) (Halobacterium pharaonis).